An 801-amino-acid chain; its full sequence is Phenylalanine--tRNA ligase beta subunit (801 aa).

The tRNA-binding domain maps to 39-153 (AEGLSKLVVG…EDAVPGESIF (115 aa)). The 76-residue stretch at 406-481 (TDDIQVSTSL…RIYGYDKLPT (76 aa)) folds into the B5 domain. Mg(2+)-binding residues include aspartate 459, aspartate 465, glutamate 468, and glutamate 469. In terms of domain architecture, FDX-ACB spans 708–801 (TKFPAVSRDI…LTEKVGAEVR (94 aa)).

It belongs to the phenylalanyl-tRNA synthetase beta subunit family. Type 1 subfamily. As to quaternary structure, tetramer of two alpha and two beta subunits. The cofactor is Mg(2+).

It localises to the cytoplasm. The catalysed reaction is tRNA(Phe) + L-phenylalanine + ATP = L-phenylalanyl-tRNA(Phe) + AMP + diphosphate + H(+). The sequence is that of Phenylalanine--tRNA ligase beta subunit from Streptococcus mutans serotype c (strain ATCC 700610 / UA159).